The primary structure comprises 310 residues: Carbamate kinase 1 (310 aa).

Homodimer (predominantly) and homotetramer.

The protein resides in the cytoplasm. It carries out the reaction hydrogencarbonate + NH4(+) + ATP = carbamoyl phosphate + ADP + H2O + H(+). Its pathway is metabolic intermediate metabolism; carbamoyl phosphate degradation; CO(2) and NH(3) from carbamoyl phosphate: step 1/1. Its activity is regulated as follows. Inhibited by adenosine(5')pentaphospho(5')adenosine (Ap5A), Ap6A and to a much lower extent by Ap4A. In terms of biological role, catalyzes the reversible synthesis of carbamate and ATP from carbamoyl phosphate and ADP. Can also catalyze, although with low efficiency, the phosphorylation of bicarbonate, leading to the formation of carboxyphosphate, an unstable intermediate found in the reactions catalyzed by carbamoyl-phosphate synthase and biotin carboxylase. Can also use acetate. In Enterococcus faecium (Streptococcus faecium), this protein is Carbamate kinase 1 (arcC1).